The chain runs to 327 residues: Tryptophan--tRNA ligase (327 aa).

Residues 9–11 (QPS) and 17–18 (GN) contribute to the ATP site. A 'HIGH' region motif is present at residues 10 to 18 (PSGDIHIGN). Asp132 lines the L-tryptophan pocket. ATP contacts are provided by residues 144 to 146 (GED), Ile183, and 192 to 196 (KMSKS). The short motif at 192–196 (KMSKS) is the 'KMSKS' region element.

It belongs to the class-I aminoacyl-tRNA synthetase family. Homodimer.

The protein localises to the cytoplasm. It carries out the reaction tRNA(Trp) + L-tryptophan + ATP = L-tryptophyl-tRNA(Trp) + AMP + diphosphate + H(+). Its function is as follows. Catalyzes the attachment of tryptophan to tRNA(Trp). This is Tryptophan--tRNA ligase from Caldanaerobacter subterraneus subsp. tengcongensis (strain DSM 15242 / JCM 11007 / NBRC 100824 / MB4) (Thermoanaerobacter tengcongensis).